We begin with the raw amino-acid sequence, 118 residues long: MARVKRGVQANRRHKKILKRAKGYYGARSRVYRVAVQAVTKAGQYAYRDRRNKKRTFRRLWIARINAGARLNGLSYSRFINGMKKANIAIDRRVLADIAMHDAATFTALVEKAKAELA.

The protein belongs to the bacterial ribosomal protein bL20 family.

Binds directly to 23S ribosomal RNA and is necessary for the in vitro assembly process of the 50S ribosomal subunit. It is not involved in the protein synthesizing functions of that subunit. The sequence is that of Large ribosomal subunit protein bL20 from Psychrobacter arcticus (strain DSM 17307 / VKM B-2377 / 273-4).